The chain runs to 312 residues: Thioredoxin reductase (312 aa).

E33–Q43 is an FAD binding site. C138 and C141 are oxidised to a cystine. D283–A292 contributes to the FAD binding site.

It belongs to the class-II pyridine nucleotide-disulfide oxidoreductase family. As to quaternary structure, homodimer. FAD serves as cofactor.

It is found in the cytoplasm. It carries out the reaction [thioredoxin]-dithiol + NADP(+) = [thioredoxin]-disulfide + NADPH + H(+). In Chlamydia trachomatis serovar D (strain ATCC VR-885 / DSM 19411 / UW-3/Cx), this protein is Thioredoxin reductase (trxB).